Here is a 1212-residue protein sequence, read N- to C-terminus: uncharacterized protein (1212 aa).

Residues 1-31 (MASIQTKLVSQPQTQQPLQNGFFNNYQQNIY) show a composition bias toward polar residues. Disordered regions lie at residues 1–70 (MASI…HLQQ), 119–169 (PQAQ…FGTN), 211–231 (SLNNSLNSSGNNSTLNTSNNN), 248–374 (INIG…NNNK), 655–681 (QQQPQQLNQNPPNQQLPQQPNQITQQQ), 935–957 (NQNQNNNNNNNNNNNNNINCNNA), and 973–1125 (QLQP…QQLQ). Low complexity-rich tracts occupy residues 48–70 (PQQQPILPQQPQPQSQQPLHLQQ) and 119–163 (PQAQ…NNNN). A compositionally biased stretch (low complexity) spans 256-275 (NNSNTNNVNNINTNNTNNNN). Polar residues-rich tracts occupy residues 276 to 285 (KSGSIDQFGS) and 292 to 317 (YVNSSSNSAIPTPPTNQTNGSNSHSP). A compositionally biased stretch (low complexity) spans 322–340 (INSNININSNLQSPQNIQQ). The segment covering 341–351 (TILSPNISPNH) has biased composition (polar residues). Positions 352 to 373 (NNNNNNNNNNNNNNNNNNNNNN) are enriched in low complexity. Low complexity-rich tracts occupy residues 998-1022 (NSVNNNINNNFINNNSFVNNNNNNN) and 1037-1125 (QNNN…QQLQ).

This is an uncharacterized protein from Dictyostelium discoideum (Social amoeba).